We begin with the raw amino-acid sequence, 143 residues long: Hemoglobin subunit alpha-2 (143 aa).

An N-acetylserine modification is found at Ser-2. Residues 2 to 143 (SLSTKDKDTV…LARALSEKYR (142 aa)) enclose the Globin domain. Positions 60 and 89 each coordinate heme b.

Belongs to the globin family. Hb 2 is a heterotetramer of two alpha-2 and two beta chains. In terms of tissue distribution, red blood cells.

Involved in oxygen transport from gills to the various peripheral tissues. This Cottoperca gobio (Frogmouth) protein is Hemoglobin subunit alpha-2.